The sequence spans 395 residues: Zinc-regulated GTPase metalloprotein activator 1F (395 aa).

The segment at 1–22 (MLPAVGSVDEEEDPAEEDCPEL) is disordered. The span at 8–20 (VDEEEDPAEEDCP) shows a compositional bias: acidic residues. A psi-PxLVp motif motif is present at residues 17 to 24 (EDCPELVP). 49-56 (GYLGAGKT) contributes to the GTP binding site. Zn(2+) is bound by residues cysteine 107, cysteine 109, and cysteine 110. The CXCC motif motif lies at 107–110 (CLCC). GTP contacts are provided by residues 110 to 114 (CSVKD) and 203 to 206 (NKTD). In terms of domain architecture, CobW C-terminal spans 274–377 (IVTITFDVPG…ILKQLFIATV (104 aa)).

This sequence belongs to the SIMIBI class G3E GTPase family. ZNG1 subfamily.

It localises to the nucleus. It carries out the reaction GTP + H2O = GDP + phosphate + H(+). Its function is as follows. Zinc chaperone that directly transfers zinc cofactor to target metalloproteins, thereby activating them. Catalyzes zinc insertion into the active site of methionine aminopeptidase METAP1, which function to cleave the initiator methionine from polypeptides during or after protein translation. Mechanistically, the N-terminal psi-PxLVp motif binds to the C6H2-type zinc finger of inactive form of METAP1. After formation of the docked complex, zinc is transferred from the CXCC motif in the GTPase domain of ZNG1F to the zinc binding site in the peptidase domain of METAP1 in a process requiring GTP hydrolysis. GTP/GDP exchange is required for release of active METAP1. This chain is Zinc-regulated GTPase metalloprotein activator 1F, found in Homo sapiens (Human).